The chain runs to 162 residues: Nucleotide-binding protein Anae109_0095 (162 aa).

This sequence belongs to the YajQ family.

Functionally, nucleotide-binding protein. This chain is Nucleotide-binding protein Anae109_0095, found in Anaeromyxobacter sp. (strain Fw109-5).